A 1308-amino-acid chain; its full sequence is Tau-tubulin kinase 1 (1308 aa).

Positions 34–297 constitute a Protein kinase domain; the sequence is WKVLKKIGGG…LIMSVFENSM (264 aa). ATP is bound by residues 40 to 48 and lysine 63; that span reads IGGGGFGEI. Residue aspartate 154 is the Proton acceptor of the active site. Disordered regions lie at residues 364–397, 418–448, 474–671, 720–899, 985–1085, and 1097–1308; these read LSDQENAPPILPGRPPEGLGPGPHLVPHPGGPEA, PCVEEEQSRGVGVPSSPVRAPPDSPTTPVRS, ERRS…APPF, QVPL…AGGG, EMES…LARL, and RLAS…PGAR. Serine 441 is modified (phosphoserine). The segment covering 485–496 has biased composition (polar residues); it reads PSRQACSSQPAQ. Serine 541 is subject to Phosphoserine. Basic and acidic residues-rich tracts occupy residues 541–555 and 574–589; these read SKEWVIIDKETELKD and ELRPLPEEGEERRRLG. The segment covering 638 to 647 has biased composition (low complexity); that stretch reads SPSHSPLHSG. Acidic residues predominate over residues 735-769; the sequence is GEEEEEEEEEEEEEEEEEEEEEEEEEEEEEEEEEA. Basic and acidic residues predominate over residues 786–795; that stretch reads GSERSTERSQ. Polar residues-rich tracts occupy residues 868–885 and 1020–1035; these read PTGSQLDVSEPGTLSSIL and ASQQEPVTKKGTTISP. Residues 1097–1107 are compositionally biased toward low complexity; the sequence is RLASGASSSSS.

This sequence belongs to the protein kinase superfamily. CK1 Ser/Thr protein kinase family. Requires Mg(2+) as cofactor. Mn(2+) is required as a cofactor. As to expression, expressed in the brain. Strong expression in the cortical layers, the CA1 layers of the hippocampus and the granular layer of the cerebellum. Also expressed in the large cortical pyramidal cells in the temporal cortex, the CA1 pyramidal neurons and the cerebellum granular neurons.

The protein localises to the cytoplasm. The catalysed reaction is L-seryl-[protein] + ATP = O-phospho-L-seryl-[protein] + ADP + H(+). It carries out the reaction L-threonyl-[protein] + ATP = O-phospho-L-threonyl-[protein] + ADP + H(+). In terms of biological role, serine/threonine kinase which is able to phosphorylate TAU on serine, threonine and tyrosine residues. Induces aggregation of TAU. This Mus musculus (Mouse) protein is Tau-tubulin kinase 1 (Ttbk1).